The sequence spans 69 residues: Disintegrin VLO5B (69 aa).

The 66-residue stretch at 1–66 (MNSANPCCDP…DCPRNPWKSE (66 aa)) folds into the Disintegrin domain. 4 cysteine pairs are disulfide-bonded: Cys-7/Cys-30, Cys-21/Cys-27, Cys-26/Cys-51, and Cys-39/Cys-58. A Cell attachment site; atypical (MLD) motif is present at residues 43–45 (MLD).

The protein belongs to the disintegrin family. Dimeric disintegrin subfamily. As to quaternary structure, heterodimer with VLO5A; disulfide-linked. In terms of tissue distribution, expressed by the venom gland.

The protein localises to the secreted. Its function is as follows. Poor inhibitor of platelet aggregation. The disintegrin inhibits the adhesion of the alpha-4/beta-1 (ITGA4/ITGB1) integrin to VCAM-1. Inhibition on alpha-2b/beta-3 (ITGA2B/ITGB3) is low. This Macrovipera lebetina obtusa (Levant blunt-nosed viper) protein is Disintegrin VLO5B.